Here is a 257-residue protein sequence, read N- to C-terminus: Imidazole glycerol phosphate synthase subunit HisF (257 aa).

Active-site residues include D12 and D131.

It belongs to the HisA/HisF family. Heterodimer of HisH and HisF.

The protein resides in the cytoplasm. The enzyme catalyses 5-[(5-phospho-1-deoxy-D-ribulos-1-ylimino)methylamino]-1-(5-phospho-beta-D-ribosyl)imidazole-4-carboxamide + L-glutamine = D-erythro-1-(imidazol-4-yl)glycerol 3-phosphate + 5-amino-1-(5-phospho-beta-D-ribosyl)imidazole-4-carboxamide + L-glutamate + H(+). It participates in amino-acid biosynthesis; L-histidine biosynthesis; L-histidine from 5-phospho-alpha-D-ribose 1-diphosphate: step 5/9. Functionally, IGPS catalyzes the conversion of PRFAR and glutamine to IGP, AICAR and glutamate. The HisF subunit catalyzes the cyclization activity that produces IGP and AICAR from PRFAR using the ammonia provided by the HisH subunit. This Paraburkholderia phymatum (strain DSM 17167 / CIP 108236 / LMG 21445 / STM815) (Burkholderia phymatum) protein is Imidazole glycerol phosphate synthase subunit HisF.